The following is a 214-amino-acid chain: Octanoyltransferase (214 aa).

The region spanning 35–211 is the BPL/LPL catalytic domain; it reads KSNMNFIWLG…IIHEEFNFNF (177 aa). Residues 75–82, 142–144, and 155–157 contribute to the substrate site; these read RGGEVTCH, SIG, and GFS. Cys173 acts as the Acyl-thioester intermediate in catalysis.

This sequence belongs to the LipB family.

The protein resides in the cytoplasm. The enzyme catalyses octanoyl-[ACP] + L-lysyl-[protein] = N(6)-octanoyl-L-lysyl-[protein] + holo-[ACP] + H(+). Its pathway is protein modification; protein lipoylation via endogenous pathway; protein N(6)-(lipoyl)lysine from octanoyl-[acyl-carrier-protein]: step 1/2. In terms of biological role, catalyzes the transfer of endogenously produced octanoic acid from octanoyl-acyl-carrier-protein onto the lipoyl domains of lipoate-dependent enzymes. Lipoyl-ACP can also act as a substrate although octanoyl-ACP is likely to be the physiological substrate. The protein is Octanoyltransferase of Prochlorococcus marinus subsp. pastoris (strain CCMP1986 / NIES-2087 / MED4).